The sequence spans 436 residues: MNYTTQMDAAKKGIITKEMQVVAEKEGINIETLMNLMAEGKIVIPANKNHKSISAEGVGQGLKTKINVNLGISKDCANIELELEKVKKAIDMNAESIMDLSNYGKTYDFRKRLVEVSTAMIGTVPMYDVVGFYDKELKDITVDEFFDVVEKHAKDGVDFVTIHAGLNRETIETFRRNKRLTNIVSRGGSLLFAWMELNNRENPFYEYFDRLLDICEKYDLTLSLGDACRPGSIADATDAVQIKELITLGELTKRAWERNVQVIIEGPGHMAMNEIEANVLLEKKLCHGAPFYVLGPIVTDIAPGYDHITSAIGGAMAASYGADFLCYVTPAEHLRLPNLEDVREGIVATKIAAHAADIAKGISGARDIDNKMSDARKRLDWDEMFSLAIDSEKAIRYRKESTPEHKDSCTMCGKMCSIRNMNKILEGKDINLLRED.

Substrate is bound by residues Asn69, Met98, Tyr127, His163, 185-187 (SRG), 226-229 (DACR), and Glu265. Residue His269 coordinates Zn(2+). Tyr292 provides a ligand contact to substrate. A Zn(2+)-binding site is contributed by His333. [4Fe-4S] cluster contacts are provided by Cys409, Cys412, and Cys416.

This sequence belongs to the ThiC family. [4Fe-4S] cluster is required as a cofactor.

The enzyme catalyses 5-amino-1-(5-phospho-beta-D-ribosyl)imidazole + S-adenosyl-L-methionine = 4-amino-2-methyl-5-(phosphooxymethyl)pyrimidine + CO + 5'-deoxyadenosine + formate + L-methionine + 3 H(+). It participates in cofactor biosynthesis; thiamine diphosphate biosynthesis. Its function is as follows. Catalyzes the synthesis of the hydroxymethylpyrimidine phosphate (HMP-P) moiety of thiamine from aminoimidazole ribotide (AIR) in a radical S-adenosyl-L-methionine (SAM)-dependent reaction. The sequence is that of Phosphomethylpyrimidine synthase from Clostridium perfringens (strain SM101 / Type A).